The following is a 96-amino-acid chain: Co-chaperonin GroES (96 aa).

This sequence belongs to the GroES chaperonin family. In terms of assembly, heptamer of 7 subunits arranged in a ring. Interacts with the chaperonin GroEL.

It is found in the cytoplasm. Its function is as follows. Together with the chaperonin GroEL, plays an essential role in assisting protein folding. The GroEL-GroES system forms a nano-cage that allows encapsulation of the non-native substrate proteins and provides a physical environment optimized to promote and accelerate protein folding. GroES binds to the apical surface of the GroEL ring, thereby capping the opening of the GroEL channel. This chain is Co-chaperonin GroES, found in Pelagibacter ubique (strain HTCC1062).